The sequence spans 264 residues: Large ribosomal subunit protein uL2 (264 aa).

The protein belongs to the universal ribosomal protein uL2 family.

It localises to the cytoplasm. This is Large ribosomal subunit protein uL2 (RPL8) from Tetrahymena thermophila (strain SB210).